Here is a 477-residue protein sequence, read N- to C-terminus: MSAVLKPTPTHDHHVADLSLADWGRKEIKIAETEMPGLMAIRQEFAASQPLKGARITGSLHMTIQTAVLVETLQALGAQVRWASCNIFSTQDHAAAALVAAGTPVFAYKGETLTDYWDYTHRIFDFGAKGTDGEGPNMILDDGGDATLLMHLGQKAEKDPSVISKPTSEEETCLFAAIKAKLAQDPTWYTRKSAQIIGVTEETTTGVHRLNEMSAKGTLLFRAINVNDSVTKSKFDNLYGCRESLVDSIKRATDVMIAGKVACVAGYGDVGKGSAQALRALSAQVWVTEIDPINALQAAMEGYKVVTMEYAADKADIFVSATGNKNVIRYEHMAAMKDEAIVCNIGHFDNEIDVASLEKLKWDEIKPQVDHVVFPDGKKITLLAKGRLVNLGCATGHPSFVMSSSFANQTIAQIELFTKSADYQVGKVYVLPKHLDEKVARLHLKKVGAMLTELTDEQAAYIGVSKSGPYKADTYRY.

Positions 63, 142, and 202 each coordinate substrate. 203 to 205 (TTT) serves as a coordination point for NAD(+). Residues K232 and D236 each coordinate substrate. NAD(+) is bound by residues N237, 266-271 (GYGDVG), E289, N324, 345-347 (IGH), and N390.

It belongs to the adenosylhomocysteinase family. Requires NAD(+) as cofactor.

It localises to the cytoplasm. The enzyme catalyses S-adenosyl-L-homocysteine + H2O = L-homocysteine + adenosine. It functions in the pathway amino-acid biosynthesis; L-homocysteine biosynthesis; L-homocysteine from S-adenosyl-L-homocysteine: step 1/1. May play a key role in the regulation of the intracellular concentration of adenosylhomocysteine. The sequence is that of Adenosylhomocysteinase from Methylibium petroleiphilum (strain ATCC BAA-1232 / LMG 22953 / PM1).